The primary structure comprises 264 residues: Phosphatidylinositol transfer protein 1 (264 aa).

The tract at residues N151 to E174 is disordered. Residues V238 to K264 are a coiled coil.

It belongs to the PtdIns transfer protein family. PI transfer class I subfamily. Phosphorylated in response to activation of rasG.

The protein resides in the cytoplasm. It localises to the golgi apparatus. In terms of biological role, catalyzes the transfer of PtdIns and phosphatidylcholine between membranes. The protein is Phosphatidylinositol transfer protein 1 (pitA) of Dictyostelium discoideum (Social amoeba).